We begin with the raw amino-acid sequence, 79 residues long: MKTLLLTLVVVTIVCLDLGNSLVCYVSGAWQKTCPEGQNKCEKYAVGTMHGSWIYLRGCASTCHEGPYNVCCSTDLCNK.

An N-terminal signal peptide occupies residues 1 to 21 (MKTLLLTLVVVTIVCLDLGNS). Cystine bridges form between cysteine 24–cysteine 41, cysteine 34–cysteine 59, cysteine 63–cysteine 71, and cysteine 72–cysteine 77.

It belongs to the three-finger toxin family. Short-chain subfamily. Expressed by the venom gland.

Its subcellular location is the secreted. The sequence is that of Three-finger toxin A2 from Micrurus laticollaris (Balsas coral snake).